A 433-amino-acid polypeptide reads, in one-letter code: MKKYLAFAVTLLGMGKVIACTTLFVGNQASADGSFIIARNEDGSANNAKHKVIHPVAFHQQGEYKAHRNNFSWPLPETAMRYTAIHDFDTNDNAMGEAGFNSAGVGMSATETIYNGRAALAADPYVTKTGITEDAIESVILPVAQSARQGAKLLGDIIEQKGAGEGFGVAFIDSKEIWYLETGSGHQWLAVRLPADSYFVSANQGRLRHYDPNDNANYMASPTLVSFAKKQGLYDPARGEFDFHQAYSQDNKNDTTYNYPRVWTLQHQFNPHLDTVVSPGETFPVFLTPITKISVAAVKNALRNHYQGTSHDPYASHNPQEPWRPISVFRTQESHILQVRPKLPQAIGNVEYIAYGMPSLSVYLPYYQGMRHYQPGDDKGPIGRATTLPTGHSARCKRWLCRTTMRLRQMCNTPAKHLNSKQLSSSIRWSRAI.

Residue Cys-20 is part of the active site.

This sequence belongs to the peptidase C69 family.

The catalysed reaction is an L-aminoacyl-L-amino acid + H2O = 2 an L-alpha-amino acid. This chain is Probable dipeptidase (pipD), found in Salmonella dublin.